Reading from the N-terminus, the 500-residue chain is Probable cytosol aminopeptidase (500 aa).

Lys-265 and Asp-270 together coordinate Mn(2+). The active site involves Lys-277. 3 residues coordinate Mn(2+): Asp-288, Asp-347, and Glu-349. The active site involves Arg-351.

The protein belongs to the peptidase M17 family. The cofactor is Mn(2+).

Its subcellular location is the cytoplasm. The catalysed reaction is Release of an N-terminal amino acid, Xaa-|-Yaa-, in which Xaa is preferably Leu, but may be other amino acids including Pro although not Arg or Lys, and Yaa may be Pro. Amino acid amides and methyl esters are also readily hydrolyzed, but rates on arylamides are exceedingly low.. It carries out the reaction Release of an N-terminal amino acid, preferentially leucine, but not glutamic or aspartic acids.. Functionally, presumably involved in the processing and regular turnover of intracellular proteins. Catalyzes the removal of unsubstituted N-terminal amino acids from various peptides. This is Probable cytosol aminopeptidase from Bdellovibrio bacteriovorus (strain ATCC 15356 / DSM 50701 / NCIMB 9529 / HD100).